An 86-amino-acid chain; its full sequence is UPF0297 protein SERP1181 (86 aa).

This sequence belongs to the UPF0297 family.

The polypeptide is UPF0297 protein SERP1181 (Staphylococcus epidermidis (strain ATCC 35984 / DSM 28319 / BCRC 17069 / CCUG 31568 / BM 3577 / RP62A)).